Consider the following 293-residue polypeptide: Biphenyl-2,3-diol 1,2-dioxygenase (293 aa).

2 VOC domains span residues 5-119 and 143-265; these read RLGY…IYYG and GIGH…FGWG. Residues H146, H210, and E261 each coordinate Fe cation.

Belongs to the extradiol ring-cleavage dioxygenase family. As to quaternary structure, homooctamer. The cofactor is Fe(2+).

It carries out the reaction biphenyl-2,3-diol + O2 = 2-hydroxy-6-oxo-6-phenylhexa-2,4-dienoate + H(+). It participates in xenobiotic degradation; biphenyl degradation; 2-hydroxy-2,4-pentadienoate and benzoate from biphenyl: step 3/4. This is Biphenyl-2,3-diol 1,2-dioxygenase (bphC) from Pseudomonas sp. (strain KKS102).